A 388-amino-acid polypeptide reads, in one-letter code: uncharacterized protein (388 aa).

The next 8 helical transmembrane spans lie at 15–37 (VISA…LLVL), 97–119 (GFSK…VVFY), 129–151 (PIWG…TFLL), 158–175 (FIYI…FLSA), 179–196 (MMLA…VLFK), 203–225 (LAFW…YLSQ), 304–326 (IFIV…YIYF), and 347–369 (LLSV…DALL).

The protein localises to the cell membrane. This is an uncharacterized protein from Aquifex aeolicus (strain VF5).